Here is a 148-residue protein sequence, read N- to C-terminus: Probable histone H2B.1 (148 aa).

The segment covering 1 to 32 has biased composition (basic and acidic residues); the sequence is MAPKGEKKPAEKKPAEEKKSTVAEKAPAEKKP. The segment at 1–57 is disordered; the sequence is MAPKGEKKPAEKKPAEEKKSTVAEKAPAEKKPKAGKKLPKEGGSAAGEKKKKRSKKS. An N6-acetyllysine mark is found at K7, K36, and K37. Residue K144 forms a Glycyl lysine isopeptide (Lys-Gly) (interchain with G-Cter in ubiquitin) linkage.

It belongs to the histone H2B family. As to quaternary structure, the nucleosome is a histone octamer containing two molecules each of H2A, H2B, H3 and H4 assembled in one H3-H4 heterotetramer and two H2A-H2B heterodimers. The octamer wraps approximately 147 bp of DNA. Post-translationally, can be acetylated to form H2BK6ac, H2BK33ac and H2BK34ac. In terms of processing, monoubiquitinated to form H2BK143ub1; may give a specific tag for epigenetic transcriptional activation.

It is found in the nucleus. Its subcellular location is the chromosome. Core component of nucleosome. Nucleosomes wrap and compact DNA into chromatin, limiting DNA accessibility to the cellular machineries which require DNA as a template. Histones thereby play a central role in transcription regulation, DNA repair, DNA replication and chromosomal stability. DNA accessibility is regulated via a complex set of post-translational modifications of histones, also called histone code, and nucleosome remodeling. The sequence is that of Probable histone H2B.1 from Medicago truncatula (Barrel medic).